A 226-amino-acid polypeptide reads, in one-letter code: Cytidylate kinase (226 aa).

14 to 22 provides a ligand contact to ATP; that stretch reads GPAGAGKST.

Belongs to the cytidylate kinase family. Type 1 subfamily.

It localises to the cytoplasm. The enzyme catalyses CMP + ATP = CDP + ADP. It carries out the reaction dCMP + ATP = dCDP + ADP. The protein is Cytidylate kinase of Symbiobacterium thermophilum (strain DSM 24528 / JCM 14929 / IAM 14863 / T).